The chain runs to 174 residues: Crossover junction endodeoxyribonuclease RuvC (174 aa).

Catalysis depends on residues aspartate 8, glutamate 67, and aspartate 139. Mg(2+) contacts are provided by aspartate 8, glutamate 67, and aspartate 139.

It belongs to the RuvC family. In terms of assembly, homodimer which binds Holliday junction (HJ) DNA. The HJ becomes 2-fold symmetrical on binding to RuvC with unstacked arms; it has a different conformation from HJ DNA in complex with RuvA. In the full resolvosome a probable DNA-RuvA(4)-RuvB(12)-RuvC(2) complex forms which resolves the HJ. Mg(2+) serves as cofactor.

Its subcellular location is the cytoplasm. The enzyme catalyses Endonucleolytic cleavage at a junction such as a reciprocal single-stranded crossover between two homologous DNA duplexes (Holliday junction).. In terms of biological role, the RuvA-RuvB-RuvC complex processes Holliday junction (HJ) DNA during genetic recombination and DNA repair. Endonuclease that resolves HJ intermediates. Cleaves cruciform DNA by making single-stranded nicks across the HJ at symmetrical positions within the homologous arms, yielding a 5'-phosphate and a 3'-hydroxyl group; requires a central core of homology in the junction. The consensus cleavage sequence is 5'-(A/T)TT(C/G)-3'. Cleavage occurs on the 3'-side of the TT dinucleotide at the point of strand exchange. HJ branch migration catalyzed by RuvA-RuvB allows RuvC to scan DNA until it finds its consensus sequence, where it cleaves and resolves the cruciform DNA. This chain is Crossover junction endodeoxyribonuclease RuvC, found in Pseudomonas fluorescens (strain SBW25).